A 606-amino-acid chain; its full sequence is uncharacterized protein (606 aa).

This is an uncharacterized protein from Sinorhizobium fredii (strain NBRC 101917 / NGR234).